Here is a 326-residue protein sequence, read N- to C-terminus: DNA-directed RNA polymerase subunit alpha (326 aa).

Residues 1–231 (MQTALLKPKI…DQLSVFAALE (231 aa)) are alpha N-terminal domain (alpha-NTD). The interval 247-326 (IDPILLRPVD…ENWPPAGLEK (80 aa)) is alpha C-terminal domain (alpha-CTD).

The protein belongs to the RNA polymerase alpha chain family. As to quaternary structure, homodimer. The RNAP catalytic core consists of 2 alpha, 1 beta, 1 beta' and 1 omega subunit. When a sigma factor is associated with the core the holoenzyme is formed, which can initiate transcription.

It catalyses the reaction RNA(n) + a ribonucleoside 5'-triphosphate = RNA(n+1) + diphosphate. Functionally, DNA-dependent RNA polymerase catalyzes the transcription of DNA into RNA using the four ribonucleoside triphosphates as substrates. The protein is DNA-directed RNA polymerase subunit alpha of Ralstonia nicotianae (strain ATCC BAA-1114 / GMI1000) (Ralstonia solanacearum).